A 213-amino-acid chain; its full sequence is Guanylate kinase (213 aa).

A Guanylate kinase-like domain is found at 12–190 (GLCLVVAAPS…AIDQVRTILH (179 aa)). 19–26 (APSGAGKS) contacts ATP.

The protein belongs to the guanylate kinase family.

It localises to the cytoplasm. The enzyme catalyses GMP + ATP = GDP + ADP. Essential for recycling GMP and indirectly, cGMP. This chain is Guanylate kinase, found in Granulibacter bethesdensis (strain ATCC BAA-1260 / CGDNIH1).